A 2115-amino-acid chain; its full sequence is Non-reducing polyketide synthase ascC (2115 aa).

The interval 1–21 (MTLIQTKHSASAAVFSPQSTA) is disordered. The segment at 14–260 (VFSPQSTAPK…HNSRNTELAQ (247 aa)) is N-terminal acylcarrier protein transacylase domain (SAT). Residues 381–805 (PDSIAIVGSA…GSNSALICSE (425 aa)) enclose the Ketosynthase family 3 (KS3) domain. Residues Cys553, His689, and His728 each act as for beta-ketoacyl synthase activity in the active site. A malonyl-CoA:ACP transacylase (MAT) domain region spans residues 908 to 1210 (LTFSGQSRTT…ANPSAHTFQA (303 aa)). The active-site For acyl/malonyl transferase activity is the Ser995. Residues 1280–1406 (PKKVQQLVTL…GDFFATSGEM (127 aa)) are N-terminal hotdog fold. The region spanning 1280–1581 (PKKVQQLVTL…FMRIKAAKLE (302 aa)) is the PKS/mFAS DH domain. The interval 1285 to 1580 (QLVTLKKTEG…QFMRIKAAKL (296 aa)) is product template (PT) domain. His1315 acts as the Proton acceptor; for dehydratase activity in catalysis. Positions 1428-1581 (DAERLRTATA…FMRIKAAKLE (154 aa)) are C-terminal hotdog fold. Catalysis depends on Asp1492, which acts as the Proton donor; for dehydratase activity. The interval 1587 to 1624 (ANPGSKTKSTNGNALPSVPRSVPAGPTSAPQQVAPTTM) is disordered. The segment covering 1588–1600 (NPGSKTKSTNGNA) has biased composition (polar residues). The Carrier domain occupies 1640-1724 (PSKIADLKSL…PTAALTEGLV (85 aa)). Ser1674 carries the post-translational modification O-(pantetheine 4'-phosphoryl)serine. Residues 1734-1748 (SDSIRNSTGFHTTIP) are compositionally biased toward polar residues. The segment at 1734–1767 (SDSIRNSTGFHTTIPATPAELHSNPPDSLDGSTV) is disordered. Residues 1777–2107 (ARFKLDTMVY…YDFLLGELEN (331 aa)) form a thioesterase (TE) domain region. Residues Ser1897 and Asp2045 each act as for thioesterase activity in the active site.

It carries out the reaction 3 malonyl-CoA + acetyl-CoA + 2 H(+) = orsellinate + 3 CO2 + 4 CoA. Its pathway is secondary metabolite biosynthesis; terpenoid biosynthesis. Non-reducing polyketide synthase; part of the asc-1 gene cluster that mediates the biosynthesis of both ascochlorin and ascofuranone, a strong inhibitor of cyanide-insensitive alternative oxidases and a promising drug candidate against African trypanosomiasis. The first step in the pathway is performed by the non-reducing polyketide synthase ascC that produces orsellinic acid by condensing acetyl-CoA with 3 malonyl-CoA units. Orsellinic acid is then prenylated by the prenyltransferase ascA to yield ilicicolinic acid B. Ilicicolinic acid B is further reduced to ilicicolin B by the reductase ascB. The halogenase ascD then chlorinates ilicicolin B to produce ilicicolin A which is converted to ilicicolin A epoxide by the cytochrome P450 monooxygenase ascE that catalyzes stereoselective epoxidation of the terminal double bond of the prenyl group. Ilicicolin A epoxide is the last common precursor for the biosynthesis of ascofuranone and ascochlorin. The terpene cyclase ascF produces a monocyclic terpene, and the cyclization reaction is proposed to be initiated by protonation of the terminal epoxide of ilicicolin A epoxide to generate a monocyclic tertiarycation, which is followed by a series of hydride and methyl shifts with abstraction of proton, leading to the formation of the (14S,15R,19R)-trimethylcyclohexanone ring structure of ilicicolin C, which is finally reduced to ascochlorin by the dehydrogenase ascG. On the other hand, ilicicolin A epoxide is hydroxylated by the cytochrome P450 monooxygenase ascH, and the resultant product is cyclized by the terpene cyclase ascI to ascofuranol via protonation-initiated epoxide ring opening, which facilitates the 6-endo-tet cyclization to form the tetrahy-drofuran ring. Finally, ascofuranol is oxidized into ascofuranone by ascJ. The sequence is that of Non-reducing polyketide synthase ascC from Acremonium egyptiacum (Oospora egyptiaca).